We begin with the raw amino-acid sequence, 594 residues long: Probable acyl-CoA dehydrogenase (594 aa).

Catalysis depends on glutamate 405, which acts as the Proton acceptor.

It belongs to the acyl-CoA dehydrogenase family. FAD is required as a cofactor.

It catalyses the reaction a 2,3-saturated acyl-CoA + A = a 2,3-dehydroacyl-CoA + AH2. It participates in lipid metabolism; fatty acid beta-oxidation. Functionally, involved in the degradation of long-chain fatty acids. The chain is Probable acyl-CoA dehydrogenase (fadE) from Bacillus subtilis (strain 168).